Reading from the N-terminus, the 334-residue chain is Adenosine deaminase (334 aa).

Residues His12 and His14 each contribute to the Zn(2+) site. Residues His14, Asp16, and Gly170 each coordinate substrate. His197 contacts Zn(2+). Catalysis depends on Glu200, which acts as the Proton donor. Asp278 is a Zn(2+) binding site. Asp279 lines the substrate pocket.

The protein belongs to the metallo-dependent hydrolases superfamily. Adenosine and AMP deaminases family. Adenosine deaminase subfamily. Zn(2+) serves as cofactor.

It carries out the reaction adenosine + H2O + H(+) = inosine + NH4(+). The enzyme catalyses 2'-deoxyadenosine + H2O + H(+) = 2'-deoxyinosine + NH4(+). In terms of biological role, catalyzes the hydrolytic deamination of adenosine and 2-deoxyadenosine. This chain is Adenosine deaminase, found in Yersinia pseudotuberculosis serotype O:1b (strain IP 31758).